A 289-amino-acid chain; its full sequence is Coiled-coil domain-containing protein 137 (289 aa).

Disordered regions lie at residues 1–64 (MAGA…QEIP), 149–184 (EVQA…EKAA), and 204–225 (QPPE…GRRS). The span at 7–20 (GAAVSRVQAGPGSP) shows a compositional bias: low complexity. S19 carries the post-translational modification Phosphoserine. Residues 155-197 (KEKSEQKKAKKAFQKRRLDKVRRKKEEKAADRLEQELLRDTVK) are a coiled coil. Over residues 162 to 177 (KAKKAFQKRRLDKVRR) the composition is skewed to basic residues. S233 bears the Phosphoserine mark. A coiled-coil region spans residues 247 to 273 (RQRIVEEERERAVQAYRALKQRQQQLH). Positions 265 to 289 (LKQRQQQLHGERPHLTSRKKPEPQL) are disordered. Over residues 273–289 (HGERPHLTSRKKPEPQL) the composition is skewed to basic and acidic residues.

The protein resides in the chromosome. This is Coiled-coil domain-containing protein 137 (CCDC137) from Homo sapiens (Human).